We begin with the raw amino-acid sequence, 1330 residues long: Protein PUTATIVE RECOMBINATION INITIATION DEFECT 1 (1330 aa).

A disordered region spans residues 1310-1330 (REGRVSPIQEETRQMQTERIV).

As to quaternary structure, interacts with SPO11-1. According to PubMed:28855712, may interact with SPO11-2; this is in contradiction with PubMed:9461215 which claims that it seems to not interact with SPO11-2. Binds to DFO, PRD3 and MTOPVIB. Facilitates an interaction between PRD3 and DFO. In terms of tissue distribution, expressed in flower buds.

The protein localises to the nucleus. Functionally, involved in DNA cleavage that forms the double-strand breaks (DSB) that initiate meiotic recombination. The chain is Protein PUTATIVE RECOMBINATION INITIATION DEFECT 1 from Arabidopsis thaliana (Mouse-ear cress).